Consider the following 299-residue polypeptide: Diaminopimelate epimerase (299 aa).

Substrate contacts are provided by asparagine 11 and asparagine 63. The active-site Proton donor is cysteine 72. Substrate contacts are provided by residues 73 to 74, asparagine 211, and 229 to 230; these read GN and ER. Cysteine 238 serves as the catalytic Proton acceptor. 239–240 contributes to the substrate binding site; that stretch reads GT.

The protein belongs to the diaminopimelate epimerase family. In terms of assembly, homodimer.

The protein resides in the cytoplasm. The catalysed reaction is (2S,6S)-2,6-diaminopimelate = meso-2,6-diaminopimelate. The protein operates within amino-acid biosynthesis; L-lysine biosynthesis via DAP pathway; DL-2,6-diaminopimelate from LL-2,6-diaminopimelate: step 1/1. In terms of biological role, catalyzes the stereoinversion of LL-2,6-diaminopimelate (L,L-DAP) to meso-diaminopimelate (meso-DAP), a precursor of L-lysine and an essential component of the bacterial peptidoglycan. This Natranaerobius thermophilus (strain ATCC BAA-1301 / DSM 18059 / JW/NM-WN-LF) protein is Diaminopimelate epimerase.